A 119-amino-acid polypeptide reads, in one-letter code: MHELSITEELLKTIVAKAEEAKARNVSRINLVIGEYAGVVEDSVKMCFEILSQDTIANGAVLEFSRIPAKFRCRLCGHTFPSGQNLLVCPECQGWNAEVIAGNEFFIESIEVDDESQSS.

A Ni(2+)-binding site is contributed by histidine 2. Positions 73, 76, 89, and 92 each coordinate Zn(2+).

Belongs to the HypA/HybF family.

Its function is as follows. Involved in the maturation of [NiFe] hydrogenases. Required for nickel insertion into the metal center of the hydrogenase. This chain is Hydrogenase maturation factor HypA, found in Dehalococcoides mccartyi (strain CBDB1).